Here is a 177-residue protein sequence, read N- to C-terminus: Non-specific lipid transfer protein GPI-anchored 22 (177 aa).

An N-terminal signal peptide occupies residues 1-29 (MARFMAYNQNPQMLALCITVAVMFLGVRS). Disulfide bonds link C38–C81, C48–C63, C64–C108, and C79–C117. The N-linked (GlcNAc...) asparagine glycan is linked to N113. A lipid anchor (GPI-anchor amidated serine) is attached at S152. The propeptide at 153–177 (SSIKGRDNKQFGLMMAGALSIWYIM) is removed in mature form.

It belongs to the plant LTP family. In terms of tissue distribution, expressed in seedlings, preferentially in hypocotyls and roots. Also observed in siliques.

The protein localises to the cell membrane. Probable lipid transfer protein. The chain is Non-specific lipid transfer protein GPI-anchored 22 from Arabidopsis thaliana (Mouse-ear cress).